Here is a 614-residue protein sequence, read N- to C-terminus: ETS-related transcription factor Elf-1 (614 aa).

Serine 110, serine 163, serine 167, and serine 168 each carry phosphoserine. The tract at residues 159 to 199 (TYAHSPGPSSPEQPKRKKGRKTKPPRPDSPTTTPNISVKKK) is disordered. Over residues 173-182 (KRKKGRKTKP) the composition is skewed to basic residues. The residue at position 187 (serine 187) is a Phosphoserine. Threonine 190 carries the phosphothreonine modification. Positions 208-290 (IYLWEFLLAL…EGQRLVYQFK (83 aa)) form a DNA-binding region, ETS. A disordered region spans residues 303 to 371 (DPSCSIESSD…VQPSEALRTV (69 aa)). The segment covering 310-335 (SSDPSLSSTATSSRNPASRSRASSSP) has biased composition (low complexity). Serine 430 is modified (phosphoserine).

This sequence belongs to the ETS family. Binds to the underphosphorylated form of RB. May interact with other transcription factors in order to regulate specific genes. Interacts with RUNX1.

It localises to the nucleus. Its function is as follows. Transcription factor that activates the LYN and BLK promoters. The protein is ETS-related transcription factor Elf-1 (ELF1) of Bos taurus (Bovine).